The following is a 380-amino-acid chain: Coiled-coil domain-containing protein 74B (380 aa).

Disordered regions lie at residues 1–51 (MSGA…KRNL), 89–108 (LIMNQTSQKKDGPSGNHLSR), and 128–202 (GGPS…DVPQ). Residues 34-44 (LRPQSPQLRQS) show a composition bias toward polar residues. A coiled-coil region spans residues 47-93 (QKRNLDLEKSLQFLQQQHSEMLAKLHEEIEHLKRENKDLRYKLIMNQ). The span at 141 to 151 (RTHRPGGKHGR) shows a compositional bias: basic residues. The segment covering 165–182 (DSLSTSSFQSVKSISNSG) has biased composition (polar residues).

The sequence is that of Coiled-coil domain-containing protein 74B (CCDC74B) from Homo sapiens (Human).